We begin with the raw amino-acid sequence, 1027 residues long: Fibril-forming collagen alpha chain (1027 aa).

Residues 1-12 are nonhelical region (N-terminal); that stretch reads YRAGPRYIQAQV. The tract at residues 1 to 1027 is disordered; it reads YRAGPRYIQA…GPPGNSDYGA (1027 aa). The segment at 13-1023 is triple-helical region; sequence GPIGPRGPPG…PGPPGPPGNS (1011 aa). Residues 17–26 show a composition bias toward pro residues; the sequence is PRGPPGPPGS. 2 positions are modified to 4-hydroxyproline; partial: proline 21 and proline 24. A 4-hydroxyproline mark is found at proline 27 and proline 39. Proline 53 carries the post-translational modification 3-hydroxyproline; partial. Proline 54 bears the 4-hydroxyproline mark. A compositionally biased stretch (basic and acidic residues) spans 63-72; sequence SGDDGRDGEP. Position 72 is a 4-hydroxyproline; partial (proline 72). A compositionally biased stretch (gly residues) spans 73–91; the sequence is GPRGGIGPMGPRGAGGMPG. Residues proline 90 and proline 93 each carry the 4-hydroxyproline modification. A 5-hydroxylysine mark is found at lysine 96 and lysine 108. O-linked (Gal...) hydroxylysine glycans are attached at residues lysine 96 and lysine 108. 4-hydroxyproline; partial is present on residues proline 123 and proline 128. At proline 150 the chain carries 4-hydroxyproline. Proline 161 carries the 3-hydroxyproline; partial modification. Proline 162 carries the post-translational modification 4-hydroxyproline. Proline 164 carries the 3-hydroxyproline; partial modification. A 4-hydroxyproline mark is found at proline 165, proline 174, proline 177, and proline 180. The segment covering 168 to 182 has biased composition (low complexity); the sequence is IGSTGSPGFPGTPGS. 5-hydroxylysine occurs at positions 183 and 192. O-linked (Gal...) hydroxylysine glycosylation occurs at lysine 192. 4-hydroxyproline is present on residues proline 207, proline 216, proline 219, proline 228, and proline 237. Residues 227-249 are compositionally biased toward low complexity; it reads EPGASGESGLPGPSGFPGPRGMP. The residue at position 243 (proline 243) is a 4-hydroxyproline; partial. Proline 249 and proline 255 each carry 4-hydroxyproline. Residues 259-268 are compositionally biased toward gly residues; that stretch reads GAKGDGGPTG. Lysine 261 bears the 5-hydroxylysine mark. O-linked (Gal...) hydroxylysine glycosylation occurs at lysine 261. Proline 273 and proline 276 each carry 4-hydroxyproline; partial. A 5-hydroxylysine modification is found at lysine 279. The O-linked (Gal...) hydroxylysine glycan is linked to lysine 279. 4-hydroxyproline; partial is present on residues proline 285, proline 291, and proline 303. Residues proline 306, proline 312, proline 321, proline 327, and proline 339 each carry the 4-hydroxyproline modification. At lysine 342 the chain carries 5-hydroxylysine. Position 348 is a 4-hydroxyproline; partial (proline 348). 5-hydroxylysine; partial is present on lysine 351. Proline 366, proline 372, and proline 375 each carry 4-hydroxyproline. Residues 380 to 396 are compositionally biased toward basic and acidic residues; it reads RPGKDGRPGIRGKDGKQ. Proline 381 is modified (4-hydroxyproline; partial). Residue proline 387 is modified to 4-hydroxyproline. Positions 398 to 420 are enriched in low complexity; that stretch reads EQGPQGPQGLAGLQGRAGPPGAR. Proline 416 carries the post-translational modification 3-hydroxyproline; partial. A 4-hydroxyproline mark is found at proline 417, proline 423, proline 429, and proline 432. Residues 437-446 show a composition bias toward basic and acidic residues; the sequence is EQGDAGKDGE. A compositionally biased stretch (low complexity) spans 447-480; it reads TGAAGPPGAAGPTGARGPPGPRGQQGFQGLAGAQ. 3 positions are modified to 4-hydroxyproline: proline 453, proline 465, and proline 483. Proline 500, proline 503, and proline 506 each carry 4-hydroxyproline; partial. Over residues 502–511 the composition is skewed to gly residues; the sequence is GPAGPGGERG. 2 positions are modified to 4-hydroxyproline: proline 513 and proline 525. A compositionally biased stretch (low complexity) spans 527 to 543; the sequence is ERGATGPAGPTGSPGVA. Residues proline 533 and proline 536 each carry the 4-hydroxyproline; partial modification. Proline 540 bears the 4-hydroxyproline mark. Lysine 546 carries the post-translational modification 5-hydroxylysine. Proline 551 bears the 3-hydroxyproline; partial mark. 4-hydroxyproline is present on residues proline 552 and proline 561. 5-hydroxylysine is present on residues lysine 567 and lysine 573. Lysine 573 carries O-linked (Gal...) hydroxylysine glycosylation. Positions 575–599 are enriched in basic and acidic residues; it reads SRGDIGPRGKAGERGKDGERGERGE. Proline 603 is subject to 4-hydroxyproline. Lysine 612 is modified (5-hydroxylysine). An O-linked (Gal...) hydroxylysine glycan is attached at lysine 612. Position 621 is a 4-hydroxyproline; partial (proline 621). Proline 627 carries the 4-hydroxyproline modification. The segment covering 635–644 has biased composition (low complexity); that stretch reads PAGSQGIQGQ. 4-hydroxyproline; partial is present on proline 645. Proline 647 carries the 3-hydroxyproline; partial modification. 4-hydroxyproline is present on proline 648. Lysine 657 bears the 5-hydroxylysine mark. A glycan (O-linked (Gal...) hydroxylysine) is linked at lysine 657. Proline 663, proline 708, proline 711, proline 714, proline 717, and proline 723 each carry 4-hydroxyproline. Residues 698-710 are compositionally biased toward low complexity; the sequence is ETGAQGEIGLPGS. Over residues 714–726 the composition is skewed to pro residues; sequence PGLPGPSGQPGPS. Lysine 738 bears the 5-hydroxylysine mark. An O-linked (Gal...) hydroxylysine glycan is attached at lysine 738. Proline 744 and proline 759 each carry 4-hydroxyproline. Over residues 750–771 the composition is skewed to basic and acidic residues; sequence QGDRGSDGEPGRDGTKGERGED. Lysine 765 carries the post-translational modification 5-hydroxylysine. O-linked (Gal...) hydroxylysine glycosylation is present at lysine 765. 3-hydroxyproline; partial is present on proline 773. Proline 774, proline 783, and proline 792 each carry 4-hydroxyproline. The segment covering 802–814 has biased composition (gly residues); it reads GPMGGQGMKGDGG. A 5-hydroxylysine modification is found at lysine 810. An O-linked (Gal...) hydroxylysine glycan is attached at lysine 810. 3-hydroxyproline; partial is present on proline 815. 10 positions are modified to 4-hydroxyproline: proline 816, proline 843, proline 849, proline 855, proline 861, proline 867, proline 888, proline 894, proline 903, and proline 915. Residues 828-848 show a composition bias toward low complexity; that stretch reads AGPQGPTGPSGQAGAPGQEGA. Over residues 884-894 the composition is skewed to low complexity; that stretch reads QRGLPGAAGPP. Residues 911–927 show a composition bias toward low complexity; it reads PVGAPGSQGPAGIMGMK. At lysine 927 the chain carries 5-hydroxylysine. Lysine 927 carries O-linked (Gal...) hydroxylysine glycosylation. 5-hydroxylysine; partial is present on lysine 933. 2 positions are modified to 5-hydroxylysine: lysine 936 and lysine 939. A glycan (O-linked (Gal...) hydroxylysine) is linked at lysine 936. Residues 942–962 are compositionally biased toward low complexity; the sequence is TGLPGLQGLQGTPGHSGESGP. The residue at position 945 (proline 945) is a 4-hydroxyproline. The residue at position 954 (proline 954) is a 4-hydroxyproline; partial. 4-hydroxyproline occurs at positions 963 and 966. The segment covering 973–982 has biased composition (gly residues); it reads GEAGGRGSQG. Low complexity predominate over residues 983-1001; sequence PPGKDGQPGPSGRVGPRGP. Residues proline 984 and proline 990 each carry the 4-hydroxyproline modification. A 3-hydroxyproline; partial modification is found at proline 1010. The span at 1010–1020 shows a compositional bias: pro residues; it reads PPGPPGPPGPP. A 4-hydroxyproline modification is found at proline 1011. Proline 1013 bears the 3-hydroxyproline; partial mark. Proline 1014 is subject to 4-hydroxyproline. Position 1016 is a 3-hydroxyproline; partial (proline 1016). A 4-hydroxyproline modification is found at proline 1017. Proline 1019 carries the post-translational modification 3-hydroxyproline; partial. Proline 1020 carries the post-translational modification 4-hydroxyproline. Positions 1024–1027 are nonhelical region (C-terminal); that stretch reads DYGA.

Homotetramer.

The protein resides in the secreted. The protein localises to the extracellular space. It localises to the extracellular matrix. In terms of biological role, fibril-forming collagen. In Riftia pachyptila (Vent tube worm), this protein is Fibril-forming collagen alpha chain.